Reading from the N-terminus, the 409-residue chain is Accessory Sec system protein translocase subunit SecY2 (409 aa).

10 consecutive transmembrane segments (helical) span residues 16 to 36, 61 to 81, 104 to 124, 132 to 152, 161 to 181, 190 to 210, 242 to 262, 286 to 306, 341 to 361, and 374 to 394; these read ILIT…PIPG, LSQV…MILL, VVML…FQYH, LLLA…IGNL, MTIL…PLIF, LAII…ITFE, GMAF…IILL, GVVI…FVNI, LFGT…LLFA, and TGIF…FQVI.

This sequence belongs to the SecY/SEC61-alpha family. SecY2 subfamily. As to quaternary structure, component of the accessory SecA2/SecY2 protein translocase complex required to export cell wall proteins. May form heterotrimers with SecE and SecG subunits.

The protein localises to the cell membrane. Part of the accessory SecA2/SecY2 system specifically required for export of possible cell wall proteins. The central subunit of a protein translocation channel. This Streptococcus agalactiae serotype III (strain NEM316) protein is Accessory Sec system protein translocase subunit SecY2.